The chain runs to 176 residues: Inner membrane assembly complex subunit 17 (176 aa).

The N-terminal 28 residues, 1-28 (MLRVLPTSFKSISTRSAFRACQLSPLTV), are a transit peptide targeting the mitochondrion. The Mitochondrial matrix segment spans residues 29–98 (YCPLKSSQGT…MSQEVSLKRF (70 aa)). Residues 99-121 (VRPLWVFFLMSSTVYLILHYVWW) traverse the membrane as a helical segment. Residues 122-176 (KLEVVEKEKELQSHVESLEMELDQTLKSQNQNVSSSQNNGNNKTNDKPWYRKWFF) lie on the Mitochondrial intermembrane side of the membrane. Residues 123-151 (LEVVEKEKELQSHVESLEMELDQTLKSQN) adopt a coiled-coil conformation. Positions 149 to 163 (SQNQNVSSSQNNGNN) are enriched in low complexity. The disordered stretch occupies residues 149–168 (SQNQNVSSSQNNGNNKTNDK).

The protein belongs to the INA17 family. As to quaternary structure, component of the inner membrane assembly (INA) complex, composed of INA17 and INA22. Interacts with a subset of F(1)F(0)-ATP synthase subunits of the F(1)-domain and the peripheral stalk.

It localises to the mitochondrion inner membrane. In terms of biological role, component of the INA complex (INAC) that promotes the biogenesis of mitochondrial F(1)F(0)-ATP synthase. INAC facilitates the assembly of the peripheral stalk and promotes the assembly of the catalytic F(1)-domain with the membrane-embedded F(0)-domain. The polypeptide is Inner membrane assembly complex subunit 17 (Zygosaccharomyces rouxii (strain ATCC 2623 / CBS 732 / NBRC 1130 / NCYC 568 / NRRL Y-229)).